A 328-amino-acid chain; its full sequence is Dof zinc finger protein PBF (328 aa).

A disordered region spans residues 33 to 56 (RDPKQTRAMPQIGGSGERKPRPQL). The Dof-type zinc finger occupies 60-114 (LKCPRCDSNNTKFCYYNNYSMSQPRYFCKACRRYWTHGGTLRNVPIGGGCRKNKH). Residues cysteine 62, cysteine 65, cysteine 87, and cysteine 90 each contribute to the Zn(2+) site. 2 disordered regions span residues 124 to 144 (TSSS…ASSS) and 306 to 328 (WNKH…NKGQ).

In terms of assembly, interacts with the bZIP transcription factor Opaque-2/O2. In terms of tissue distribution, seed endosperm.

The protein resides in the nucleus. In terms of biological role, transcription factor that binds specifically to a 5'-AA[AG]G-3' consensus core sequence. May enhance the DNA binding of the bZIP transcription factor Opaque-2 to O2 binding site elements. This chain is Dof zinc finger protein PBF (PBF), found in Zea mays (Maize).